The following is a 258-amino-acid chain: UPF0758 protein BamMC406_2419 (258 aa).

The segment at Cys13–Pro42 is disordered. The segment covering Arg31–Pro42 has biased composition (basic residues). Positions Gln136–Leu258 constitute an MPN domain. The Zn(2+) site is built by His207, His209, and Asp220. The JAMM motif signature appears at His207–Asp220.

The protein belongs to the UPF0758 family.

The protein is UPF0758 protein BamMC406_2419 of Burkholderia ambifaria (strain MC40-6).